Reading from the N-terminus, the 481-residue chain is Glutamate--glyoxylate aminotransferase 1 (481 aa).

An N6-(pyridoxal phosphate)lysine modification is found at Lys-291. The Peroxisomal targeting signal signature appears at 479–481; sequence SKM.

The protein belongs to the class-I pyridoxal-phosphate-dependent aminotransferase family. Alanine aminotransferase subfamily. Homodimer. Pyridoxal 5'-phosphate is required as a cofactor. The N-terminus is blocked. As to expression, mostly expressed in leaves, and, to a lower extent, in shoots, stems, flowers, seedlings and green siliques.

The protein resides in the peroxisome. The catalysed reaction is L-alanine + 2-oxoglutarate = pyruvate + L-glutamate. It catalyses the reaction glyoxylate + L-alanine = glycine + pyruvate. The enzyme catalyses glycine + 2-oxoglutarate = glyoxylate + L-glutamate. The protein operates within amino-acid biosynthesis; glycine biosynthesis; glycine from glyoxylate: step 1/1. It functions in the pathway photosynthesis; C4 acid pathway. It participates in amino-acid degradation; L-alanine degradation via transaminase pathway; pyruvate from L-alanine: step 1/1. Its function is as follows. Catalyzes the glutamate:glyoxylate (GGT or GGAT), alanine:glyoxylate (AGT), alanine:2-oxoglutarate (AKT) and glutamate:pyruvate (GPT) aminotransferase reactions in peroxisomes. Required for abscisic acid (ABA)- and stress-mediated responses in an H(2)O(2)-dependent manner. Functions as a photorespiratory aminotransferase that modulates amino acid content during photorespiration (GGAT activity); promotes serine, glycine and citrulline metabolism in response to light. The polypeptide is Glutamate--glyoxylate aminotransferase 1 (GGAT1) (Arabidopsis thaliana (Mouse-ear cress)).